A 379-amino-acid chain; its full sequence is Alcohol dehydrogenase 1 (379 aa).

8 residues coordinate Zn(2+): cysteine 47, threonine 49, histidine 69, cysteine 99, cysteine 102, cysteine 105, cysteine 113, and cysteine 177. 2 residues coordinate an alcohol: threonine 49 and histidine 69. Residue threonine 49 participates in NAD(+) binding. Residues glycine 202–glycine 207, aspartate 226, arginine 231, threonine 272, valine 295, valine 295–valine 297, phenylalanine 322, and arginine 372 each bind NAD(+).

Belongs to the zinc-containing alcohol dehydrogenase family. As to quaternary structure, homodimer. It depends on Zn(2+) as a cofactor.

The protein resides in the cytoplasm. It carries out the reaction a primary alcohol + NAD(+) = an aldehyde + NADH + H(+). The catalysed reaction is a secondary alcohol + NAD(+) = a ketone + NADH + H(+). The sequence is that of Alcohol dehydrogenase 1 (ADH1) from Cenchrus americanus (Pearl millet).